Reading from the N-terminus, the 362-residue chain is MQFGCNVAEAFGLRRSGVVLLTDQSLRSMPLSQQKKVEIILDGMGRGSQAAQGLPSPITSLAFIRDSHHFLFLAVDEDQCLGILKGGIKHLFMLDSQNETHEMDAMCCLDFYTHETVQRRGIGTRLFRAMELHTHISAQGWAFDRPSPKLLAFLSKVYDMHDFKAQPNNFLMLDASIRLWGAEFKQYRRSKKHYIPDAYLLPETRESEYLGEAELTKRTLIRKSTAVIPQTKTTQSEDAPARALTADELLSKRSVVLPTASRTPSLPDQPQSVAAAYMNKRIEGAGPSFEQYMRDHYGAKSLIVPSEIQTSLNHSKDSVSQEDMIQRQRQLDRMAFTLAREANARGSIHNTVGRGVICGRRG.

The N-acetyltransferase domain maps to 1 to 177 (MQFGCNVAEA…NNFLMLDASI (177 aa)). Acetyl-CoA-binding positions include 111–124 (FYTH…GIGT) and 147–156 (SPKLLAFLSK).

It belongs to the acetyltransferase ATAT1 family.

The catalysed reaction is L-lysyl-[alpha-tubulin] + acetyl-CoA = N(6)-acetyl-L-lysyl-[alpha-tubulin] + CoA + H(+). Functionally, specifically acetylates 'Lys-40' in alpha-tubulin on the lumenal side of microtubules. Promotes microtubule destabilization and accelerates microtubule dynamics; this activity may be independent of acetylation activity. Acetylates alpha-tubulin with a slow enzymatic rate, due to a catalytic site that is not optimized for acetyl transfer. Enters the microtubule through each end and diffuses quickly throughout the lumen of microtubules. Acetylates only long/old microtubules because of its slow acetylation rate since it does not have time to act on dynamically unstable microtubules before the enzyme is released. This chain is Alpha-tubulin N-acetyltransferase, found in Giardia intestinalis (strain ATCC 50803 / WB clone C6) (Giardia lamblia).